Consider the following 421-residue polypeptide: Cell division protein FtsZ (421 aa).

GTP contacts are provided by residues 26-30 (GGGGN), 132-134 (GTG), Glu163, Arg167, and Asn211.

The protein belongs to the FtsZ family. In terms of assembly, homodimer. Polymerizes to form a dynamic ring structure in a strictly GTP-dependent manner. Interacts directly with several other division proteins.

Its subcellular location is the cytoplasm. Functionally, essential cell division protein that forms a contractile ring structure (Z ring) at the future cell division site. The regulation of the ring assembly controls the timing and the location of cell division. One of the functions of the FtsZ ring is to recruit other cell division proteins to the septum to produce a new cell wall between the dividing cells. Binds GTP and shows GTPase activity. In Haemophilus influenzae (strain ATCC 51907 / DSM 11121 / KW20 / Rd), this protein is Cell division protein FtsZ.